We begin with the raw amino-acid sequence, 745 residues long: Prolyl oligopeptidase ophP (745 aa).

Active-site charge relay system residues include S580, D665, and H701.

This sequence belongs to the peptidase S9A family. In terms of assembly, monomer.

The catalysed reaction is Hydrolysis of Pro-|-Xaa &gt;&gt; Ala-|-Xaa in oligopeptides.. The protein operates within mycotoxin biosynthesis. Functionally, prolyl oligopeptidase; part of the gene cluster that mediates the biosynthesis of omphalotin A, a highly methylated cyclic dodecapeptide with nematodicidal activity. Excises and catalyzes the macrocyclization of the methylated core peptide of OphMA to yield omphalotin A. OphP works in a two-step fashion with an initial cleavage at the N-terminus, followed by a second cleavage at the C-terminus of the core peptide. According to this mechanism, the free N-terminus of the core peptide, generated by the first cleavage, attacks the covalent intermediate of the second cleavage, which results in macrocyclization of the core peptide. This is Prolyl oligopeptidase ophP from Omphalotus olearius (Jack o'lantern).